The following is a 141-amino-acid chain: Transcription antitermination protein NusB (141 aa).

The protein belongs to the NusB family.

In terms of biological role, involved in transcription antitermination. Required for transcription of ribosomal RNA (rRNA) genes. Binds specifically to the boxA antiterminator sequence of the ribosomal RNA (rrn) operons. The polypeptide is Transcription antitermination protein NusB (Fervidobacterium nodosum (strain ATCC 35602 / DSM 5306 / Rt17-B1)).